The primary structure comprises 62 residues: Venom protein 51.1 (62 aa).

A signal peptide spans 1 to 25; it reads MKFFGILLIVTMVVLVMIATTYVES. Disulfide bonds link cysteine 32/cysteine 53, cysteine 39/cysteine 58, and cysteine 43/cysteine 60.

In terms of tissue distribution, expressed by the venom gland.

It localises to the secreted. Functionally, neurotoxin. Decreases the action potential of myelinated nerves in mice and frogs. This is Venom protein 51.1 from Lychas mucronatus (Chinese swimming scorpion).